The following is a 481-amino-acid chain: Aspartyl/glutamyl-tRNA(Asn/Gln) amidotransferase subunit B (481 aa).

Belongs to the GatB/GatE family. GatB subfamily. In terms of assembly, heterotrimer of A, B and C subunits.

The catalysed reaction is L-glutamyl-tRNA(Gln) + L-glutamine + ATP + H2O = L-glutaminyl-tRNA(Gln) + L-glutamate + ADP + phosphate + H(+). It carries out the reaction L-aspartyl-tRNA(Asn) + L-glutamine + ATP + H2O = L-asparaginyl-tRNA(Asn) + L-glutamate + ADP + phosphate + 2 H(+). Allows the formation of correctly charged Asn-tRNA(Asn) or Gln-tRNA(Gln) through the transamidation of misacylated Asp-tRNA(Asn) or Glu-tRNA(Gln) in organisms which lack either or both of asparaginyl-tRNA or glutaminyl-tRNA synthetases. The reaction takes place in the presence of glutamine and ATP through an activated phospho-Asp-tRNA(Asn) or phospho-Glu-tRNA(Gln). The sequence is that of Aspartyl/glutamyl-tRNA(Asn/Gln) amidotransferase subunit B from Pseudomonas putida (strain ATCC 47054 / DSM 6125 / CFBP 8728 / NCIMB 11950 / KT2440).